We begin with the raw amino-acid sequence, 217 residues long: MDIISVALKRHSTKAFDASKKLTAEEAEKIKTLLQYSPSSTNSQPWHFIVASTEEGKARVAKSAAGTYVFNERKMLDASHVVVFCAKTAMDDAWLERVVDQEEADGRFNTPEAKAANHKGRTYFADMHRVDLKDDDQWMAKQVYLNVGNFLLGVGAMGLDAVPIEGFDAAILDEEFGLKEKGFTSLVVVPVGHHSVEDFNATLPKSRLPLSTIVTEC.

Residue 10–14 (RHSTK) participates in FMN binding. Positions 14, 41, 67, 71, 74, and 107 each coordinate NAD(+). N71 provides a ligand contact to FMN. Residues 165-166 (EG) and 205-207 (KSR) contribute to the FMN site.

This sequence belongs to the nitroreductase family. Homodimer. Requires FMN as cofactor.

Reduction of a variety of nitroaromatic compounds using NADH (and to lesser extent NADPH) as source of reducing equivalents; two electrons are transferred. This is Oxygen-insensitive NAD(P)H nitroreductase from Enterobacter cloacae.